The sequence spans 104 residues: L-rhamnose mutarotase (104 aa).

Tyrosine 18 provides a ligand contact to substrate. The active-site Proton donor is the histidine 22. Residues tyrosine 41 and 76-77 (WW) each bind substrate.

It belongs to the rhamnose mutarotase family. As to quaternary structure, homodimer.

It localises to the cytoplasm. It catalyses the reaction alpha-L-rhamnose = beta-L-rhamnose. It functions in the pathway carbohydrate metabolism; L-rhamnose metabolism. Involved in the anomeric conversion of L-rhamnose. In Shigella flexneri serotype 5b (strain 8401), this protein is L-rhamnose mutarotase.